We begin with the raw amino-acid sequence, 541 residues long: Effector protein hopAB1 (541 aa).

3 disordered regions span residues 1–94, 168–222, and 317–338; these read MPGI…EAQQ, QRAL…RHPQ, and RQTTTNSPELPPLASSAESGRR. The segment covering 18-31 has biased composition (basic and acidic residues); sequence TDGEPVTEREHDSS. Residues 183–196 show a composition bias toward low complexity; it reads SSSGSSQRSLIGRS.

Belongs to the HopAB family.

It is found in the secreted. Effector protein that plays different roles depending on the species and plant cultivars that interact with the pathogen. Acts as a virulence determinant by enhancing the development of disease symptoms and bacterial growth. Acts as an avirulence factor by eliciting hypersensitive response (HR) and plant resistance. The sequence is that of Effector protein hopAB1 (hopAB1) from Pseudomonas savastanoi (Pseudomonas syringae pv. savastanoi).